A 121-amino-acid chain; its full sequence is Ribosome-binding factor A (121 aa).

It belongs to the RbfA family. In terms of assembly, monomer. Binds 30S ribosomal subunits, but not 50S ribosomal subunits or 70S ribosomes.

The protein localises to the cytoplasm. In terms of biological role, one of several proteins that assist in the late maturation steps of the functional core of the 30S ribosomal subunit. Associates with free 30S ribosomal subunits (but not with 30S subunits that are part of 70S ribosomes or polysomes). Required for efficient processing of 16S rRNA. May interact with the 5'-terminal helix region of 16S rRNA. The chain is Ribosome-binding factor A from Lactobacillus acidophilus (strain ATCC 700396 / NCK56 / N2 / NCFM).